Here is a 416-residue protein sequence, read N- to C-terminus: Gamma-glutamyl phosphate reductase (416 aa).

Belongs to the gamma-glutamyl phosphate reductase family.

It localises to the cytoplasm. It catalyses the reaction L-glutamate 5-semialdehyde + phosphate + NADP(+) = L-glutamyl 5-phosphate + NADPH + H(+). It functions in the pathway amino-acid biosynthesis; L-proline biosynthesis; L-glutamate 5-semialdehyde from L-glutamate: step 2/2. Functionally, catalyzes the NADPH-dependent reduction of L-glutamate 5-phosphate into L-glutamate 5-semialdehyde and phosphate. The product spontaneously undergoes cyclization to form 1-pyrroline-5-carboxylate. This is Gamma-glutamyl phosphate reductase from Glaesserella parasuis serovar 5 (strain SH0165) (Haemophilus parasuis).